The chain runs to 642 residues: Threonine--tRNA ligase (642 aa).

The TGS domain maps to 1 to 61 (MPVITLPDGS…VDDASVAIIT (61 aa)). The segment at 243–534 (DHRKIGKQLD…LTEEYAGFFP (292 aa)) is catalytic. Zn(2+)-binding residues include Cys-334, His-385, and His-511.

This sequence belongs to the class-II aminoacyl-tRNA synthetase family. Homodimer. Zn(2+) serves as cofactor.

Its subcellular location is the cytoplasm. It catalyses the reaction tRNA(Thr) + L-threonine + ATP = L-threonyl-tRNA(Thr) + AMP + diphosphate + H(+). Functionally, catalyzes the attachment of threonine to tRNA(Thr) in a two-step reaction: L-threonine is first activated by ATP to form Thr-AMP and then transferred to the acceptor end of tRNA(Thr). Also edits incorrectly charged L-seryl-tRNA(Thr). This chain is Threonine--tRNA ligase, found in Erwinia tasmaniensis (strain DSM 17950 / CFBP 7177 / CIP 109463 / NCPPB 4357 / Et1/99).